The chain runs to 118 residues: UPF0102 protein Bcav_2532 (118 aa).

It belongs to the UPF0102 family.

This is UPF0102 protein Bcav_2532 from Beutenbergia cavernae (strain ATCC BAA-8 / DSM 12333 / CCUG 43141 / JCM 11478 / NBRC 16432 / NCIMB 13614 / HKI 0122).